Reading from the N-terminus, the 133-residue chain is Small ribosomal subunit protein uS9 (133 aa).

This sequence belongs to the universal ribosomal protein uS9 family.

This is Small ribosomal subunit protein uS9 from Ureaplasma urealyticum serovar 10 (strain ATCC 33699 / Western).